We begin with the raw amino-acid sequence, 162 residues long: Cyclic pyranopterin monophosphate synthase (162 aa).

Substrate-binding positions include 75–77 (MCH) and 115–116 (ME). The active site involves Asp130.

The protein belongs to the MoaC family. In terms of assembly, homohexamer; trimer of dimers.

The enzyme catalyses (8S)-3',8-cyclo-7,8-dihydroguanosine 5'-triphosphate = cyclic pyranopterin phosphate + diphosphate. The protein operates within cofactor biosynthesis; molybdopterin biosynthesis. Functionally, catalyzes the conversion of (8S)-3',8-cyclo-7,8-dihydroguanosine 5'-triphosphate to cyclic pyranopterin monophosphate (cPMP). The chain is Cyclic pyranopterin monophosphate synthase from Geobacillus kaustophilus (strain HTA426).